Reading from the N-terminus, the 110-residue chain is Integration host factor subunit alpha (110 aa).

This sequence belongs to the bacterial histone-like protein family. In terms of assembly, heterodimer of an alpha and a beta chain.

Its function is as follows. This protein is one of the two subunits of integration host factor, a specific DNA-binding protein that functions in genetic recombination as well as in transcriptional and translational control. The chain is Integration host factor subunit alpha from Delftia acidovorans (strain DSM 14801 / SPH-1).